The primary structure comprises 609 residues: NURS complex subunit pir2 (609 aa).

Positions Met1–Gln25 are enriched in basic and acidic residues. Disordered regions lie at residues Met1–Gly60 and Glu187–Lys210. Positions Arg27–Ser36 are enriched in low complexity. Phosphoserine occurs at positions 28 and 30. The span at Ala37 to Arg57 shows a compositional bias: basic and acidic residues. The segment covering Leu201–Lys210 has biased composition (polar residues). The C2H2-type zinc finger occupies Tyr474 to His499.

The protein belongs to the ARS2 family. In terms of assembly, interacts with ccr4.

The protein resides in the nucleus. This chain is NURS complex subunit pir2, found in Schizosaccharomyces pombe (strain 972 / ATCC 24843) (Fission yeast).